Consider the following 856-residue polypeptide: Protein translocase subunit SecA (856 aa).

ATP-binding positions include Gln77, 95–99 (GEGKT), and Asp534.

Belongs to the SecA family. As to quaternary structure, monomer and homodimer. Part of the essential Sec protein translocation apparatus which comprises SecA, SecYEG and auxiliary proteins SecDF. Other proteins may also be involved.

It is found in the cell inner membrane. Its subcellular location is the cytoplasm. The catalysed reaction is ATP + H2O + cellular proteinSide 1 = ADP + phosphate + cellular proteinSide 2.. Part of the Sec protein translocase complex. Interacts with the SecYEG preprotein conducting channel. Has a central role in coupling the hydrolysis of ATP to the transfer of proteins into and across the cell membrane, serving as an ATP-driven molecular motor driving the stepwise translocation of polypeptide chains across the membrane. This chain is Protein translocase subunit SecA, found in Thermosipho africanus (strain TCF52B).